Here is a 1723-residue protein sequence, read N- to C-terminus: Homeobox protein 5 (1723 aa).

A compositionally biased stretch (low complexity) spans 36–50 (QLQQPQHQPQHYQQQ). Disordered regions lie at residues 36–425 (QLQQ…APGT), 440–522 (SSSP…QLQQ), 543–756 (ENIT…PPLT), 878–978 (GTIV…TGSL), 1080–1214 (IFNN…SENN), 1226–1264 (VSLGSLPTNTPSSMEIEQQQQQQQQQQQQQQQQHLNQQQ), 1345–1399 (IVNN…TQTS), 1456–1498 (QQQQ…STTT), and 1513–1547 (HNQQVSPISPRSPRSPHGTSGDYNDGSQSPSSRRK). Polar residues predominate over residues 51 to 72 (DSFVSPNLDNNNPQIHVQSNNY). Low complexity-rich tracts occupy residues 73–107 (NQNGFVGYNNSNNNNNNNQHMNNQYSNSFHNNNSS) and 114–212 (NNSS…NNNN). Polar residues-rich tracts occupy residues 223-237 (SQPTSPYNNPIQHNP) and 244-257 (GQHNPFNGNQMVMD). Low complexity-rich tracts occupy residues 258–284 (NNNNNNNNNNSNVFNSNSNSNVFNSNS) and 291–350 (NNNN…NNNN). A coiled-coil region spans residues 300 to 351 (YNNNNNNNNNNNSNSNNNNNNNNNNNNNNNNNNNNNNNNNNNNNSNNNNNNQ). The span at 351-369 (QFSQSYDSTLGNNRFSSMM) shows a compositional bias: polar residues. 2 stretches are compositionally biased toward low complexity: residues 371–421 (QPIQ…LIGS) and 440–465 (SSSPTSSPSSPVKKGKSQSALALSSS). Residues 483–510 (MSSITNTNLKSTQASTLKESKRSNSSPN) are compositionally biased toward polar residues. 3 stretches are compositionally biased toward low complexity: residues 511-522 (LKKQMQLQQLQQ), 544-571 (NITNNNNNNNNNNNNNNNNNNNNNITNN), and 581-593 (NSNNINQSSDSIN). A compositionally biased stretch (polar residues) spans 632 to 655 (HISTTQQSPSLNGSTGGSMLTPTM). The segment covering 660–669 (LSGGGSGGGF) has biased composition (gly residues). The span at 673–685 (ISPTGTTSNKDLQ) shows a compositional bias: polar residues. Low complexity-rich tracts occupy residues 686–699 (SSPSPSPLLKSMSM), 710–727 (SMSSPLSPNSSLSSSNGL), and 734–745 (SNNMNSSGGIPT). A compositionally biased stretch (pro residues) spans 746-755 (PSTPTSPPPL). Positions 882–928 (NPTNVNNNNINNNNNNNNNNNNNNNNNNNNNNNNNNNNTTTTTTTTT) are enriched in low complexity. Over residues 929–945 (SANTVQSGTTSNSNLVF) the composition is skewed to polar residues. Low complexity-rich tracts occupy residues 946–977 (QQTSNSNTLSPSQQQQQQTQQQQSINGSSTGS) and 1082–1146 (NNNN…SINS). Composition is skewed to polar residues over residues 1147-1159 (PRPSTPTTLNSSG) and 1176-1187 (DISTGLMASSDQ). The stretch at 1193–1270 (QQQQHQQLVN…NQQQILHQQL (78 aa)) forms a coiled coil. A compositionally biased stretch (low complexity) spans 1194–1214 (QQQHQQLVNNNNNNMNNSENN). The span at 1226–1242 (VSLGSLPTNTPSSMEIE) shows a compositional bias: polar residues. Composition is skewed to low complexity over residues 1243–1264 (QQQQQQQQQQQQQQQQHLNQQQ), 1347–1384 (NNQNNNNNDQNNNNNNNNNNNSTTNSNVNNNNNTTNTP), 1456–1480 (QQQQQQQETPHTPTSNSISSPRSSP), 1487–1498 (SNTNTTTTSTTT), and 1518–1528 (SPISPRSPRSP). Residues 1431–1464 (VLQQQQQQQQQQQQQQQQQQQQQQQQQQQQQQET) adopt a coiled-coil conformation. The segment covering 1529–1543 (HGTSGDYNDGSQSPS) has biased composition (polar residues). The homeobox DNA-binding region spans 1543–1607 (SSRRKNRFTD…NKRARSRPSP (65 aa)). One can recognise an EF-hand domain in the interval 1553-1588 (FQIKRMNDCFENLDKNNNGKFTSEEICQIATELGLT). Disordered stretches follow at residues 1598–1625 (NKRARSRPSPRGQPTNPLTSSTNNGNNS) and 1661–1723 (LHQQ…TINE). A compositionally biased stretch (low complexity) spans 1612-1625 (TNPLTSSTNNGNNS). The stretch at 1632–1702 (LQQQHLQQVQ…NNNNNNNNNN (71 aa)) forms a coiled coil. Positions 1665 to 1675 (SANTTPQLNSM) are enriched in polar residues. Residues 1676–1723 (NPNSINYNNNNNNNNNNNNNNNNNNNNNNNNNNNNNNIINNNITTINE) show a composition bias toward low complexity.

The protein localises to the nucleus. Putative transcription factor. This chain is Homeobox protein 5 (hbx5-1), found in Dictyostelium discoideum (Social amoeba).